The primary structure comprises 256 residues: Pimeloyl-[acyl-carrier protein] methyl ester esterase (256 aa).

In terms of domain architecture, AB hydrolase-1 spans 15 to 242 (HLVLLHGWGL…AAHAPFISHP (228 aa)). Substrate contacts are provided by residues Trp-22, 82–83 (SL), and 143–147 (FLALQ). The active-site Nucleophile is the Ser-82. Catalysis depends on residues Asp-207 and His-235. His-235 contacts substrate.

The protein belongs to the AB hydrolase superfamily. Carboxylesterase BioH family. As to quaternary structure, monomer.

It localises to the cytoplasm. The catalysed reaction is 6-carboxyhexanoyl-[ACP] methyl ester + H2O = 6-carboxyhexanoyl-[ACP] + methanol + H(+). It participates in cofactor biosynthesis; biotin biosynthesis. Its function is as follows. The physiological role of BioH is to remove the methyl group introduced by BioC when the pimeloyl moiety is complete. It allows to synthesize pimeloyl-ACP via the fatty acid synthetic pathway through the hydrolysis of the ester bonds of pimeloyl-ACP esters. The protein is Pimeloyl-[acyl-carrier protein] methyl ester esterase of Salmonella dublin (strain CT_02021853).